A 359-amino-acid polypeptide reads, in one-letter code: Peptide chain release factor 1 (359 aa).

Position 236 is an N5-methylglutamine (glutamine 236).

The protein belongs to the prokaryotic/mitochondrial release factor family. Methylated by PrmC. Methylation increases the termination efficiency of RF1.

Its subcellular location is the cytoplasm. Its function is as follows. Peptide chain release factor 1 directs the termination of translation in response to the peptide chain termination codons UAG and UAA. The chain is Peptide chain release factor 1 from Streptococcus pyogenes serotype M3 (strain ATCC BAA-595 / MGAS315).